We begin with the raw amino-acid sequence, 690 residues long: Elongation factor G (690 aa).

Residues 8 to 283 enclose the tr-type G domain; that stretch reads EDYRNFGIMA…AVVDFLPSPL (276 aa). GTP-binding positions include 17 to 24, 81 to 85, and 135 to 138; these read AHIDAGKT, DTPGH, and NKMD.

The protein belongs to the TRAFAC class translation factor GTPase superfamily. Classic translation factor GTPase family. EF-G/EF-2 subfamily.

Its subcellular location is the cytoplasm. Functionally, catalyzes the GTP-dependent ribosomal translocation step during translation elongation. During this step, the ribosome changes from the pre-translocational (PRE) to the post-translocational (POST) state as the newly formed A-site-bound peptidyl-tRNA and P-site-bound deacylated tRNA move to the P and E sites, respectively. Catalyzes the coordinated movement of the two tRNA molecules, the mRNA and conformational changes in the ribosome. This is Elongation factor G from Nitrobacter hamburgensis (strain DSM 10229 / NCIMB 13809 / X14).